A 103-amino-acid chain; its full sequence is Eukaryotic translation initiation factor 4E-1A-binding protein homolog (103 aa).

The tract at residues 49–103 is disordered; it reads NSPLSKTPPPQLAHITNTELNKKVEKSTTTPTTTTPPTTTAKPKPTNDDDIFPME. A compositionally biased stretch (low complexity) spans 76–92; sequence TTTPTTTTPPTTTAKPK.

This sequence belongs to the eIF4E-binding protein family.

Functionally, regulates assembly of the eIF4F complex. The sequence is that of Eukaryotic translation initiation factor 4E-1A-binding protein homolog (febA) from Dictyostelium discoideum (Social amoeba).